The chain runs to 160 residues: Putative NrdI-like protein (160 aa).

The protein belongs to the NrdI family.

This is Putative NrdI-like protein from Streptococcus pyogenes serotype M6 (strain ATCC BAA-946 / MGAS10394).